The chain runs to 437 residues: Serine hydroxymethyltransferase 2 (437 aa).

(6S)-5,6,7,8-tetrahydrofolate-binding positions include Leu125 and 129 to 131; that span reads GHL. Lys234 is subject to N6-(pyridoxal phosphate)lysine.

Belongs to the SHMT family. In terms of assembly, homodimer. Requires pyridoxal 5'-phosphate as cofactor.

It is found in the cytoplasm. It catalyses the reaction (6R)-5,10-methylene-5,6,7,8-tetrahydrofolate + glycine + H2O = (6S)-5,6,7,8-tetrahydrofolate + L-serine. Its pathway is one-carbon metabolism; tetrahydrofolate interconversion. It functions in the pathway amino-acid biosynthesis; glycine biosynthesis; glycine from L-serine: step 1/1. Its function is as follows. Catalyzes the reversible interconversion of serine and glycine with tetrahydrofolate (THF) serving as the one-carbon carrier. This reaction serves as the major source of one-carbon groups required for the biosynthesis of purines, thymidylate, methionine, and other important biomolecules. Also exhibits THF-independent aldolase activity toward beta-hydroxyamino acids, producing glycine and aldehydes, via a retro-aldol mechanism. This chain is Serine hydroxymethyltransferase 2, found in Mesorhizobium japonicum (strain LMG 29417 / CECT 9101 / MAFF 303099) (Mesorhizobium loti (strain MAFF 303099)).